A 206-amino-acid chain; its full sequence is Ribosomal RNA large subunit methyltransferase E (206 aa).

S-adenosyl-L-methionine contacts are provided by Gly61, Trp63, Asp81, Asp97, and Asp122. Residue Lys162 is the Proton acceptor of the active site.

Belongs to the class I-like SAM-binding methyltransferase superfamily. RNA methyltransferase RlmE family.

The protein resides in the cytoplasm. The enzyme catalyses uridine(2552) in 23S rRNA + S-adenosyl-L-methionine = 2'-O-methyluridine(2552) in 23S rRNA + S-adenosyl-L-homocysteine + H(+). Functionally, specifically methylates the uridine in position 2552 of 23S rRNA at the 2'-O position of the ribose in the fully assembled 50S ribosomal subunit. The sequence is that of Ribosomal RNA large subunit methyltransferase E from Neisseria meningitidis serogroup C / serotype 2a (strain ATCC 700532 / DSM 15464 / FAM18).